An 804-amino-acid chain; its full sequence is Ribonucleoside-diphosphate reductase large subunit-like protein (804 aa).

Belongs to the ribonucleoside diphosphate reductase large chain family. In terms of assembly, the genome of human herpesvirus-6 does not code for a ribonucleotide reductase small subunit.

The protein localises to the virion. The protein resides in the host cytoplasm. In terms of biological role, does not possess a ribonucleotide reductase activity. Betaherpesviruses probably use another strategy to expand the dNTP pool in a quiescent host cell. The polypeptide is Ribonucleoside-diphosphate reductase large subunit-like protein (Human herpesvirus 6B (strain Z29) (HHV-6 variant B)).